Here is a 520-residue protein sequence, read N- to C-terminus: Pleckstrin homology domain-containing family A member 8 (520 aa).

A PH domain is found at 1-93 (MEGVLYKWTN…WLVALGSAKA (93 aa)). Thr-139 is modified (phosphothreonine). At Ser-145 the chain carries Phosphoserine. The residue at position 153 (Thr-153) is a Phosphothreonine. Residues 255–268 (ISSEENTDGNTTVQ) show a composition bias toward polar residues. The segment at 255–303 (ISSEENTDGNTTVQGERMKEDGEENLESHDRDLAQPGSDSVCSPESPWE) is disordered. Residues 270–287 (ERMKEDGEENLESHDRDL) show a composition bias toward basic and acidic residues. The tract at residues 311-520 (TFFSTMNTSF…IHGLESDEVV (210 aa)) is glycolipid transfer protein homology domain.

Homodimer. Interacts with ARF1; the interaction together with phosphatidylinositol 4-phosphate binding is required for FAPP2 GlcCer transfer ability.

The protein resides in the golgi apparatus. The protein localises to the trans-Golgi network membrane. It localises to the membrane. Cargo transport protein that is required for apical transport from the trans-Golgi network (TGN). Transports AQP2 from the trans-Golgi network (TGN) to sites of AQP2 phosphorylation. Mediates the non-vesicular transport of glucosylceramide (GlcCer) from the trans-Golgi network (TGN) to the plasma membrane and plays a pivotal role in the synthesis of complex glycosphingolipids. Binding of both phosphatidylinositol 4-phosphate (PIP) and ARF1 are essential for the GlcCer transfer ability. Also required for primary cilium formation, possibly by being involved in the transport of raft lipids to the apical membrane, and for membrane tubulation. This is Pleckstrin homology domain-containing family A member 8 (Plekha8) from Rattus norvegicus (Rat).